A 278-amino-acid chain; its full sequence is NAD kinase (278 aa).

The active-site Proton acceptor is the aspartate 56. NAD(+) is bound by residues aspartate 56–glycine 57, asparagine 132–glutamate 133, arginine 158, aspartate 160, and threonine 171–serine 176.

It belongs to the NAD kinase family. The cofactor is a divalent metal cation.

It is found in the cytoplasm. The enzyme catalyses NAD(+) + ATP = ADP + NADP(+) + H(+). Its function is as follows. Involved in the regulation of the intracellular balance of NAD and NADP, and is a key enzyme in the biosynthesis of NADP. Catalyzes specifically the phosphorylation on 2'-hydroxyl of the adenosine moiety of NAD to yield NADP. The sequence is that of NAD kinase from Streptococcus agalactiae serotype V (strain ATCC BAA-611 / 2603 V/R).